Here is a 627-residue protein sequence, read N- to C-terminus: Pheromone B alpha 2 receptor (627 aa).

At 1-7 the chain is on the extracellular side; it reads MLDPTYP. Residues 8 to 28 form a helical membrane-spanning segment; it reads AFPIFAFLGIVCCLVPLPWHL. Residues 29 to 35 are Cytoplasmic-facing; that stretch reads QSWNSGT. Residues 36-56 form a helical membrane-spanning segment; the sequence is CFLMIWTAVACLNMFVNSIIW. Over 57–69 the chain is Extracellular; the sequence is KDHAQNVAPVWCE. Residues 70-90 traverse the membrane as a helical segment; it reads ISIRITLGASVGIPASSLCIV. Residues 91-102 are Cytoplasmic-facing; sequence RRLYSIAKKFRA. Residues 103 to 123 traverse the membrane as a helical segment; the sequence is VMVDALICVLFPILYIILQIV. Residues 124 to 150 are Extracellular-facing; sequence VQGHRFNILENIGCFPAIINTPLTYPL. The chain crosses the membrane as a helical span at residues 151–171; the sequence is TFMWPVLIGVISFIYSTLALI. Topologically, residues 172–197 are cytoplasmic; the sequence is QFNRHRLQFTQFLHSNSTLSVSRYLR. Residues 198 to 218 form a helical membrane-spanning segment; it reads LMALAMTEMMCTTPMGVFVII. At 219 to 260 the chain is on the extracellular side; it reads LNAKATPVSPYVSWAVTHYGYGRIDQVPAIIWRSNRLLVASY. Residues 261 to 281 traverse the membrane as a helical segment; the sequence is ELTRWSSPAIALIFFFYFGFA. Residues 282 to 627 lie on the Cytoplasmic side of the membrane; the sequence is QEARRNYAAA…ASPRTHRASV (346 aa). Disordered regions lie at residues 363-405, 479-505, and 518-627; these read LPRP…SSPI, TVPQ…SSSA, and LPST…RASV. Residues 372–387 are compositionally biased toward low complexity; it reads SSSGFSSSDSTRFGSS. Polar residues-rich tracts occupy residues 519-533 and 545-555; these read PSTT…SLPT and SLSQLFGISSM. Residues 569–607 are compositionally biased toward low complexity; sequence ATGTASPTTTAPAPASTTIAPASATMAPATTTTAPTTIA.

It belongs to the G-protein coupled receptor 4 family.

The protein localises to the cell membrane. Functionally, receptor for the BAP2 pheromone, a prenylated mating factor. The receptor/pheromone interaction may have a role in the fusion of clamp cells. This chain is Pheromone B alpha 2 receptor (BAR2), found in Schizophyllum commune (Split gill fungus).